Here is a 118-residue protein sequence, read N- to C-terminus: Ribonuclease P protein component (118 aa).

Belongs to the RnpA family. Consists of a catalytic RNA component (M1 or rnpB) and a protein subunit.

It carries out the reaction Endonucleolytic cleavage of RNA, removing 5'-extranucleotides from tRNA precursor.. In terms of biological role, RNaseP catalyzes the removal of the 5'-leader sequence from pre-tRNA to produce the mature 5'-terminus. It can also cleave other RNA substrates such as 4.5S RNA. The protein component plays an auxiliary but essential role in vivo by binding to the 5'-leader sequence and broadening the substrate specificity of the ribozyme. The sequence is that of Ribonuclease P protein component from Desulfatibacillum aliphaticivorans.